Here is a 94-residue protein sequence, read N- to C-terminus: Defensin alpha 5 (94 aa).

Positions 1 to 19 (MRTIAILAAILLVALQAQA) are cleaved as a signal peptide. Disulfide bonds link Cys65-Cys93, Cys67-Cys82, and Cys72-Cys92.

It belongs to the alpha-defensin family. Homodimer. Homotetramer. Interacts with B.antracis lef/lethal factor. Glycosylated. In terms of processing, proteolytically cleaved at Arg-62 by trypsin. Both the propeptide form proHD5/HD5(20-94) and HD5(56-94) are cleaved into the lumenal peptide form HD5(63-94) by trypsin. Unprocessed proHD5 exerts antimicrobial activities, but peptide potency is enhanced by peptide processing. Proteolytically cleaved in duodenal fluid; derived fragments are antimicrobially active against commensal bacteria (in vitro). Post-translationally, (Microbial infection) The disulfide bridges and homodimerization are a prerequisite for the enhancement of S.flexneri adhesion and invasion. Expressed in the gastrointestinal, reproductive, and urinary tracts (at protein level). Expressed in Paneth cells of the small intestine (at protein level). Expressed throughout the urothelium of the lower urinary tract and in the collecting tubules of the kidney (at protein level). Expressed in stratified squamous epithelial cells of the female genital tract epithelia, such as in vagina, ectocervix, endocervix, endometrium, and fallopian tube (at protein level). Endometrial expression correlates with stages of the menstrual cycle: Expression is low during the early proliferative phase, increased during the mid- to late proliferative phase, peaks during the early secretory phase of the cycle, and decreases during the mid- to late secretory phase.

It localises to the secreted. The protein localises to the cytoplasmic vesicle. The protein resides in the secretory vesicle. Host-defense peptide that maintains sterility in the urogenital system. Has antimicrobial activity against a wide range of bacteria, including Gram-negative E.coli, P.aeruginosa and S.typhimurium, and Gram-positive E.aerogenes, S.aureus, B.cereus, E.faecium and L.monocytogenes. Confers resistance to intestinal infection by S.typhimurium. Exhibits antimicrobial activity against enteric commensal bacteria such as B.adolescentis, L.acidophilus, B.breve, L.fermentum, B.longum and S.thermophilus. Binds to bacterial membranes and causes membrane disintegration. Induces the secretion of the chemokine IL-8 by intestinal epithelial cells. Binds to B.antracis lef/lethal factor, a major virulence factor from B.anthracis, and neutralizes its enzymatic activity. Functionally, (Microbial infection) Acts as a target for S.flexneri infection by binding to the bacterium, possibly via bacterial surface proteins, and thereby augmenting infectivity via enhanced bacterial adhesion and invasion of epithelial cells and tissues. The sequence is that of Defensin alpha 5 (DEFA5) from Homo sapiens (Human).